Here is a 706-residue protein sequence, read N- to C-terminus: Probable rhamnogalacturonate lyase B (706 aa).

The first 19 residues, 1 to 19, serve as a signal peptide directing secretion; it reads MRLLHPLIPASLLLTLTSA. Residues Asn-27, Asn-40, Asn-143, Asn-239, Asn-285, Asn-380, Asn-495, Asn-569, Asn-597, and Asn-638 are each glycosylated (N-linked (GlcNAc...) asparagine).

Belongs to the polysaccharide lyase 4 family.

It is found in the secreted. It carries out the reaction Endotype eliminative cleavage of L-alpha-rhamnopyranosyl-(1-&gt;4)-alpha-D-galactopyranosyluronic acid bonds of rhamnogalacturonan I domains in ramified hairy regions of pectin leaving L-rhamnopyranose at the reducing end and 4-deoxy-4,5-unsaturated D-galactopyranosyluronic acid at the non-reducing end.. Pectinolytic enzymes consist of four classes of enzymes: pectin lyase, polygalacturonase, pectin methylesterase and rhamnogalacturonase. Degrades the rhamnogalacturonan I (RG-I) backbone of pectin. The chain is Probable rhamnogalacturonate lyase B (rglB) from Aspergillus niger (strain ATCC MYA-4892 / CBS 513.88 / FGSC A1513).